The chain runs to 295 residues: Small ribosomal subunit protein uS3 (295 aa).

The KH type-2 domain maps to 39–107 (VREYLKKKLK…PVAVNIEEVR (69 aa)). The tract at residues 213 to 295 (GTGAKMIEVA…AAAADGAKTE (83 aa)) is disordered. A compositionally biased stretch (basic and acidic residues) spans 224–245 (EERKPRGPRRDARPGDRPDRGA). 2 stretches are compositionally biased toward low complexity: residues 246–255 (PRGAPRAPRG) and 283–295 (AAPAAAADGAKTE).

Belongs to the universal ribosomal protein uS3 family. Part of the 30S ribosomal subunit. Forms a tight complex with proteins S10 and S14.

Functionally, binds the lower part of the 30S subunit head. Binds mRNA in the 70S ribosome, positioning it for translation. This chain is Small ribosomal subunit protein uS3, found in Polaromonas naphthalenivorans (strain CJ2).